The sequence spans 852 residues: Protein mono-ADP-ribosyltransferase PARP8 (852 aa).

Disordered stretches follow at residues 113–134 and 289–310; these read NGEE…NDSE and SPSY…EQDG. Over residues 123 to 134 the composition is skewed to acidic residues; sequence VEEDSEGDNDSE. ADP-ribosylcysteine occurs at positions 332, 366, 375, and 394. Residues 615-842 form the PARP catalytic domain; it reads EMTQAPYLEI…QEGGIHKEIL (228 aa). Residues 748-775 form a disordered region; it reads QKVSSKDEPASSSKSSNASQSQKKGQQS. Residues 757–775 are compositionally biased toward low complexity; that stretch reads ASSSKSSNASQSQKKGQQS.

The protein belongs to the ARTD/PARP family. Auto-mono-ADP-ribosylated.

It catalyses the reaction L-cysteinyl-[protein] + NAD(+) = S-(ADP-D-ribosyl)-L-cysteinyl-[protein] + nicotinamide + H(+). In terms of biological role, mono-ADP-ribosyltransferase that mediates mono-ADP-ribosylation of target proteins. The sequence is that of Protein mono-ADP-ribosyltransferase PARP8 from Mus musculus (Mouse).